The following is a 637-amino-acid chain: DNA damage-binding protein CMR1 (637 aa).

2 disordered regions span residues Met-1 to Ala-91 and Leu-144 to Arg-168. Composition is skewed to basic and acidic residues over residues Glu-8–Lys-23 and Ala-74–Ala-91. 5 WD repeats span residues Val-185–Asn-226, His-255–Ile-295, Ala-297–Asp-321, Val-361–Lys-401, and Lys-431–Glu-470. 2 disordered regions span residues Ser-482–Leu-508 and Lys-525–Ile-549. 2 WD repeats span residues Gly-556 to Leu-598 and Asn-602 to Pro-637.

Belongs to the WD repeat DDB2/WDR76 family.

Functionally, DNA-binding protein that binds to both single- and double-stranded DNA. Binds preferentially to UV-damaged DNA. May be involved in DNA-metabolic processes. This chain is DNA damage-binding protein CMR1, found in Mycosarcoma maydis (Corn smut fungus).